The following is a 457-amino-acid chain: Glycerol-3-phosphate acyltransferase 3 (457 aa).

Residues 14 to 34 traverse the membrane as a helical segment; the sequence is WLTLVGSLILLPSAFGLSLGI. 2 positions are modified to phosphoserine: S68 and S77. 2 helical membrane-spanning segments follow: residues 137-157 and 161-181; these read ISPKLTIVWVLGVLVRYCFLL and VTLAFIGISLLIIGTTLVGQL. The HXXXXD motif signature appears at 229–234; sequence HTSPID. The segment at 429–457 is disordered; the sequence is GNGSPSLALDSSTVDNHGSPEPAFRSESL. Residues 431-444 show a composition bias toward polar residues; sequence GSPSLALDSSTVDN.

It belongs to the 1-acyl-sn-glycerol-3-phosphate acyltransferase family.

The protein resides in the endoplasmic reticulum membrane. The catalysed reaction is sn-glycerol 3-phosphate + an acyl-CoA = a 1-acyl-sn-glycero-3-phosphate + CoA. It carries out the reaction a 1-acyl-sn-glycero-3-phosphate + an acyl-CoA = a 1,2-diacyl-sn-glycero-3-phosphate + CoA. It catalyses the reaction dodecanoyl-CoA + sn-glycerol 3-phosphate = 1-dodecanoyl-sn-glycerol 3-phosphate + CoA. The enzyme catalyses sn-glycerol 3-phosphate + hexadecanoyl-CoA = 1-hexadecanoyl-sn-glycero-3-phosphate + CoA. The catalysed reaction is sn-glycerol 3-phosphate + (9Z)-octadecenoyl-CoA = 1-(9Z-octadecenoyl)-sn-glycero-3-phosphate + CoA. It carries out the reaction (9Z,12Z)-octadecadienoyl-CoA + sn-glycerol 3-phosphate = 1-(9Z,12Z)-octadecadienoyl-sn-glycero-3-phosphate + CoA. It catalyses the reaction 1-tetradecanoyl-sn-glycerol 3-phosphate + (9Z)-octadecenoyl-CoA = 1-tetradecanoyl-2-(9Z)-octadecenoyl-sn-glycero-3-phosphate + CoA. The enzyme catalyses 1-hexadecanoyl-sn-glycero-3-phosphate + (9Z)-octadecenoyl-CoA = 1-hexadecanoyl-2-(9Z-octadecenoyl)-sn-glycero-3-phosphate + CoA. The catalysed reaction is 1-(9Z-octadecenoyl)-sn-glycero-3-phosphate + (9Z)-octadecenoyl-CoA = 1,2-di-(9Z-octadecenoyl)-sn-glycero-3-phosphate + CoA. It carries out the reaction 1-(6Z,9Z,12Z-octadecatrienoyl)-sn-glycero-3-phosphate + (9Z)-octadecenoyl-CoA = (6Z,9Z,12Z)-octadecatrienoyl-2-(9Z)-octadecenoyl-sn-glycero-3-phosphate + CoA. It catalyses the reaction 1-(9Z,12Z,15Z)-octadecatrienoyl-sn-glycero-3-phosphate + (9Z)-octadecenoyl-CoA = 1-(9Z,12Z,15Z)-octadecatrienoyl-2-(9Z)-octadecenoyl-sn-glycero-3-phosphate + CoA. The enzyme catalyses 1-(9Z-octadecenoyl)-sn-glycero-3-phosphate + tetradecanoyl-CoA = 1-(9Z)-octadecenoyl-2-tetradecanoyl-sn-glycero-3-phosphate + CoA. The catalysed reaction is 1-(9Z-octadecenoyl)-sn-glycero-3-phosphate + hexadecanoyl-CoA = 1-(9Z)-octadecenoyl-2-hexadecanoyl-sn-glycero-3-phosphate + CoA. It carries out the reaction 1-(9Z-octadecenoyl)-sn-glycero-3-phosphate + octadecanoyl-CoA = 1-(9Z-octadecenoyl)-2-octadecanoyl-sn-glycero-3-phosphate + CoA. It catalyses the reaction 1-(9Z-octadecenoyl)-sn-glycero-3-phosphate + (9Z,12Z)-octadecadienoyl-CoA = 1-(9Z)-octadecenoyl-2-(9Z,12Z)-octadecadienoyl-sn-glycero-3-phosphate + CoA. The enzyme catalyses 1-(5Z,8Z,11Z,14Z-eicosatetraenoyl)-sn-glycero-3-phosphate + (9Z)-octadecenoyl-CoA = 1-(5Z,8Z,11Z,14Z)-eicosatetraenoyl-2-(9Z)-octadecenoyl-sn-glycero-3-phosphate + CoA. It participates in glycerolipid metabolism; triacylglycerol biosynthesis. It functions in the pathway phospholipid metabolism; CDP-diacylglycerol biosynthesis; CDP-diacylglycerol from sn-glycerol 3-phosphate: step 1/3. Its function is as follows. Converts glycerol-3-phosphate to 1-acyl-sn-glycerol-3-phosphate (lysophosphatidic acid or LPA) by incorporating an acyl moiety at the sn-1 position of the glycerol backbone. Also converts LPA into 1,2-diacyl-sn-glycerol-3-phosphate (phosphatidic acid or PA) by incorporating an acyl moiety at the sn-2 position of the glycerol backbone. Protects cells against lipotoxicity. The chain is Glycerol-3-phosphate acyltransferase 3 from Rattus norvegicus (Rat).